A 102-amino-acid chain; its full sequence is Small ribosomal subunit protein uS10 (102 aa).

This sequence belongs to the universal ribosomal protein uS10 family. As to quaternary structure, part of the 30S ribosomal subunit.

In terms of biological role, involved in the binding of tRNA to the ribosomes. This is Small ribosomal subunit protein uS10 from Geobacillus kaustophilus (strain HTA426).